Reading from the N-terminus, the 531-residue chain is Polypyrimidine tract-binding protein 2 (531 aa).

Met-1 carries the N-acetylmethionine modification. Phosphoserine is present on residues Ser-26 and Ser-27. 2 RRM domains span residues 59–133 (RVLH…YSNH) and 181–257 (LRII…FSKL). Phosphoserine is present on Ser-308. 2 consecutive RRM domains span residues 338–412 (TVLL…LSKH) and 455–529 (ATLH…FSKS).

Monomer. Interacts with NOVA1; the interaction is direct. Identified in a mRNP complex, at least composed of DHX9, DDX3X, ELAVL1, HNRNPU, IGF2BP1, ILF3, PABPC1, PCBP2, PTBP2, STAU1, STAU2, SYNCRIP and YBX1. Part of a ternary complex containing KHSRP and HNRPH1. Interacts with NOVA2; the interaction is direct.

It localises to the nucleus. Functionally, RNA-binding protein which binds to intronic polypyrimidine tracts and mediates negative regulation of exons splicing. May antagonize in a tissue-specific manner the ability of NOVA1 to activate exon selection. In addition to its function in pre-mRNA splicing, plays also a role in the regulation of translation. This Rattus norvegicus (Rat) protein is Polypyrimidine tract-binding protein 2.